Reading from the N-terminus, the 253-residue chain is Proproteinase E (253 aa).

The propeptide at 1 to 11 (FSQPFSRPSSR) is activation peptide. The Peptidase S1 domain occupies 12-251 (VVNGEDAVPY…FIDWIDETIA (240 aa)). 5 disulfide bridges follow: cysteine 41/cysteine 57, cysteine 100/cysteine 103, cysteine 140/cysteine 206, cysteine 171/cysteine 187, and cysteine 196/cysteine 227.

It belongs to the peptidase S1 family. As to quaternary structure, monomer. The zymogen is secreted as a ternary complex composed of procarboxypeptidase A, chymotrypsinogen C and proproteinase E. Pancreas.

The protein resides in the secreted. The protein localises to the extracellular space. May protect procarboxypeptidase A against denaturation in the acidic environment of the ruminant duodenum. This Bos taurus (Bovine) protein is Proproteinase E.